The sequence spans 320 residues: TATA box-binding protein-like 2 (320 aa).

This sequence belongs to the TBP family. Expression is restricted to the gonads, and is higher in the ovary than the testis.

It is found in the nucleus. In terms of biological role, TATA box-binding transcription factor. Members of the TBP family are differentially required to regulate transcription and development during early embryogenesis. Required for gastrulation. Regulates a large subset of genes that are ventrally expressed. Binds to a subset of promoters. This Xenopus laevis (African clawed frog) protein is TATA box-binding protein-like 2.